The following is a 571-amino-acid chain: Septation ring formation regulator EzrA (571 aa).

Over 1–3 (MYY) the chain is Extracellular. The chain crosses the membrane as a helical span at residues 4–22 (MLIGFIIVVIAVISAGYIL). At 23–571 (KRKHYQRINE…ESKVSVDDIE (549 aa)) the chain is on the cytoplasmic side. Coiled coils occupy residues 170–215 (EAKL…QMER), 248–299 (LAQM…TLEH), 326–374 (DALA…ASGE), 400–437 (NFAE…ERER), and 478–529 (RIAE…ENHF).

This sequence belongs to the EzrA family.

The protein localises to the cell membrane. Negative regulator of FtsZ ring formation; modulates the frequency and position of FtsZ ring formation. Inhibits FtsZ ring formation at polar sites. Interacts either with FtsZ or with one of its binding partners to promote depolymerization. This Listeria innocua serovar 6a (strain ATCC BAA-680 / CLIP 11262) protein is Septation ring formation regulator EzrA.